A 973-amino-acid polypeptide reads, in one-letter code: Putative cell agglutination protein pfl3 (973 aa).

A signal peptide spans 1 to 24 (MSLFPQILLRLLFLAFTLKSTSNA). N-linked (GlcNAc...) asparagine glycosylation is found at asparagine 75, asparagine 96, asparagine 147, asparagine 171, asparagine 184, asparagine 218, and asparagine 253. 18 tandem repeats follow at residues 198 to 232 (GTIT…IPTA), 233 to 267 (GTVT…IPTA), 268 to 302 (GTRT…LPTA), 303 to 337 (GTNT…YPTA), 338 to 372 (GMVT…IPTA), 373 to 407 (GTVT…IPTA), 408 to 442 (GTRT…LPTA), 443 to 477 (GTNT…EPTA), 478 to 512 (GVVT…EPTA), 513 to 547 (GVVT…EPTA), 548 to 582 (GVVT…EPTA), 583 to 617 (GVVT…EPTA), 618 to 652 (GVVT…EPTA), 653 to 687 (GVVT…EPTA), 688 to 722 (GVVT…EPTA), 723 to 757 (GVVT…EPTA), 758 to 792 (GVVT…EPTA), and 793 to 828 (GYVT…VPSL). The segment at 198–828 (GTITLTTISG…GTVLQVVPSL (631 aa)) is 18 X 35 AA approximate tandem repeats. N-linked (GlcNAc...) asparagine glycans are attached at residues asparagine 352 and asparagine 393. Residues 820–973 (TVLQVVPSLF…SNVYFKAVPL (154 aa)) enclose the DIPSY domain. N-linked (GlcNAc...) asparagine glycosylation occurs at asparagine 848.

This sequence belongs to the mam3/map4 family.

The protein resides in the cell surface. Functionally, may be involved in agglutination during conjugation or other aspects of colony formation. Induces flocculation when overexpressed. This is Putative cell agglutination protein pfl3 from Schizosaccharomyces pombe (strain 972 / ATCC 24843) (Fission yeast).